The following is a 364-amino-acid chain: Long-wave-sensitive opsin 1 (364 aa).

Residues 1–58 lie on the Extracellular side of the membrane; it reads MTQRWGPQRLAGGQPQAGLEESTQASIFTYTNSNATRDPFEGPNYHIAPRWVYHLTSA. Ser-22 carries an O-linked (GlcNAc) serine glycan. An N-linked (GlcNAc...) asparagine glycan is attached at Asn-34. Residues 59–79 form a helical membrane-spanning segment; it reads WMIFVVIASVFTNGLVLVATM. Over 80–90 the chain is Cytoplasmic; sequence RFKKLRHPLNW. A helical membrane pass occupies residues 91-111; that stretch reads ILVNLAIADLAETIIASTISV. The Extracellular segment spans residues 112-126; sequence VNQIYGYFVLGHPLC. Cys-126 and Cys-203 form a disulfide bridge. The helical transmembrane segment at 127-147 threads the bilayer; it reads VVEGYTVSLCGITGLWSLAII. Residues 148 to 168 are Cytoplasmic-facing; the sequence is SWERWLVVCKPFGNVRFDAKL. A helical transmembrane segment spans residues 169–189; the sequence is AIAGIAFSWIWAAVWTAPPIF. The Extracellular portion of the chain corresponds to 190–219; that stretch reads GWSRYWPHGLKTSCGPDVFSGSSYPGVQSY. Residues 220 to 240 form a helical membrane-spanning segment; the sequence is MIVLMTTCCIIPLSVIILCYL. Topologically, residues 241-269 are cytoplasmic; sequence QVWLAIRAVAKQQKESESTQKAEKEVTRM. A helical membrane pass occupies residues 270–290; sequence VVVMVLAYCLCWGPYTFFACF. The Extracellular segment spans residues 291-301; it reads AAAHPGYAFHP. The chain crosses the membrane as a helical span at residues 302–324; it reads LVAALPAYFAKSATIYNPIIYVF. The residue at position 312 (Lys-312) is an N6-(retinylidene)lysine. Residues 325 to 364 are Cytoplasmic-facing; sequence MNRQFRNCILQLFGKKVDDSSELSSASRTEASSVSSVSPA.

Belongs to the G-protein coupled receptor 1 family. Opsin subfamily. In terms of processing, phosphorylated on some or all of the serine and threonine residues present in the C-terminal region. In terms of tissue distribution, the three color pigments are found in the cone photoreceptor cells.

The protein localises to the membrane. Its function is as follows. Visual pigments are the light-absorbing molecules that mediate vision. They consist of an apoprotein, opsin, covalently linked to cis-retinal. This Canis lupus familiaris (Dog) protein is Long-wave-sensitive opsin 1 (OPN1LW).